Reading from the N-terminus, the 156-residue chain is Small ribosomal subunit protein uS7 (156 aa).

Belongs to the universal ribosomal protein uS7 family. As to quaternary structure, part of the 30S ribosomal subunit. Contacts proteins S9 and S11.

One of the primary rRNA binding proteins, it binds directly to 16S rRNA where it nucleates assembly of the head domain of the 30S subunit. Is located at the subunit interface close to the decoding center, probably blocks exit of the E-site tRNA. The protein is Small ribosomal subunit protein uS7 of Thermoanaerobacter sp. (strain X514).